The following is an 880-amino-acid chain: Alanine--tRNA ligase (880 aa).

Zn(2+)-binding residues include H548, H552, C651, and H655.

This sequence belongs to the class-II aminoacyl-tRNA synthetase family. The cofactor is Zn(2+).

Its subcellular location is the cytoplasm. It catalyses the reaction tRNA(Ala) + L-alanine + ATP = L-alanyl-tRNA(Ala) + AMP + diphosphate. Catalyzes the attachment of alanine to tRNA(Ala) in a two-step reaction: alanine is first activated by ATP to form Ala-AMP and then transferred to the acceptor end of tRNA(Ala). Also edits incorrectly charged Ser-tRNA(Ala) and Gly-tRNA(Ala) via its editing domain. The polypeptide is Alanine--tRNA ligase (Tropheryma whipplei (strain TW08/27) (Whipple's bacillus)).